Reading from the N-terminus, the 430-residue chain is Adenylosuccinate synthetase (430 aa).

GTP contacts are provided by residues 12 to 18 (GDEGKGK) and 40 to 42 (GHT). Aspartate 13 serves as the catalytic Proton acceptor. Positions 13 and 40 each coordinate Mg(2+). Residues 13–16 (DEGK), 38–41 (NAGH), threonine 130, arginine 144, glutamine 224, threonine 239, and arginine 303 contribute to the IMP site. The Proton donor role is filled by histidine 41. 299 to 305 (VVTGRKR) is a binding site for substrate. GTP-binding positions include arginine 305, 331 to 333 (KLD), and 413 to 415 (STS).

This sequence belongs to the adenylosuccinate synthetase family. In terms of assembly, homodimer. It depends on Mg(2+) as a cofactor.

It is found in the cytoplasm. The enzyme catalyses IMP + L-aspartate + GTP = N(6)-(1,2-dicarboxyethyl)-AMP + GDP + phosphate + 2 H(+). Its pathway is purine metabolism; AMP biosynthesis via de novo pathway; AMP from IMP: step 1/2. Functionally, plays an important role in the de novo pathway of purine nucleotide biosynthesis. Catalyzes the first committed step in the biosynthesis of AMP from IMP. The sequence is that of Adenylosuccinate synthetase from Methylobacterium nodulans (strain LMG 21967 / CNCM I-2342 / ORS 2060).